Here is a 603-residue protein sequence, read N- to C-terminus: NADH-ubiquinone oxidoreductase chain 5 (603 aa).

Transmembrane regions (helical) follow at residues 38–58 (SIVASTFIISLFPTTMFMCLD), 87–107 (MMFIPVALFVTWSIMEFSLWY), 122–142 (LIFLITMLILVTANNLFQLFI), 144–160 (WEGVGIMSFLLISWWYA), 171–191 (AILYNRIGDIGFILALAWFIL), 211–233 (TPLLGLLLAAAGKSAQLGLHPWL), 241–261 (TPVSALLHSSTMVVAGIFLLI), 272–292 (LIQTLTLCLGAITTLFAAVCA), 301–320 (IVAFSTSSQLGLMMVTIGIN), 325–347 (AFLHICTHAFFKAMLFMCSGSII), 370–390 (STSLTIGSLALAGMPFLTGFY), 407–429 (WALSITLIATSLTSAYSTRMILL), 458–478 (AAGSLFAGFLITNNISPASPF), 482–502 (IPLYLKLTALAVTFLGLLTAL), and 582–602 (GMIKLYFLSFFFPLILTLLLI).

The protein belongs to the complex I subunit 5 family. Core subunit of respiratory chain NADH dehydrogenase (Complex I) which is composed of 45 different subunits.

It is found in the mitochondrion inner membrane. It catalyses the reaction a ubiquinone + NADH + 5 H(+)(in) = a ubiquinol + NAD(+) + 4 H(+)(out). Core subunit of the mitochondrial membrane respiratory chain NADH dehydrogenase (Complex I) which catalyzes electron transfer from NADH through the respiratory chain, using ubiquinone as an electron acceptor. Essential for the catalytic activity and assembly of complex I. This Homo sapiens (Human) protein is NADH-ubiquinone oxidoreductase chain 5 (MT-ND5).